Here is an 81-residue protein sequence, read N- to C-terminus: Exodeoxyribonuclease 7 small subunit (81 aa).

It belongs to the XseB family. In terms of assembly, heterooligomer composed of large and small subunits.

The protein localises to the cytoplasm. It carries out the reaction Exonucleolytic cleavage in either 5'- to 3'- or 3'- to 5'-direction to yield nucleoside 5'-phosphates.. Its function is as follows. Bidirectionally degrades single-stranded DNA into large acid-insoluble oligonucleotides, which are then degraded further into small acid-soluble oligonucleotides. The protein is Exodeoxyribonuclease 7 small subunit of Paramagnetospirillum magneticum (strain ATCC 700264 / AMB-1) (Magnetospirillum magneticum).